Consider the following 197-residue polypeptide: ATP-dependent Clp protease proteolytic subunit (197 aa).

Catalysis depends on Ser-98, which acts as the Nucleophile. The active site involves His-123.

The protein belongs to the peptidase S14 family. In terms of assembly, fourteen ClpP subunits assemble into 2 heptameric rings which stack back to back to give a disk-like structure with a central cavity, resembling the structure of eukaryotic proteasomes.

The protein localises to the cytoplasm. It catalyses the reaction Hydrolysis of proteins to small peptides in the presence of ATP and magnesium. alpha-casein is the usual test substrate. In the absence of ATP, only oligopeptides shorter than five residues are hydrolyzed (such as succinyl-Leu-Tyr-|-NHMec, and Leu-Tyr-Leu-|-Tyr-Trp, in which cleavage of the -Tyr-|-Leu- and -Tyr-|-Trp bonds also occurs).. Its function is as follows. Cleaves peptides in various proteins in a process that requires ATP hydrolysis. Has a chymotrypsin-like activity. Plays a major role in the degradation of misfolded proteins. The sequence is that of ATP-dependent Clp protease proteolytic subunit from Natranaerobius thermophilus (strain ATCC BAA-1301 / DSM 18059 / JW/NM-WN-LF).